The following is a 407-amino-acid chain: Biflaviolin synthase CYP158A1 (407 aa).

The segment covering 1–11 (MTQETTTLTGQ) has biased composition (polar residues). The segment at 1–20 (MTQETTTLTGQSPPPVRDWP) is disordered. Flaviolin is bound by residues Arg-92, Tyr-199, and 290–291 (HR). Cys-356 is a binding site for heme.

This sequence belongs to the cytochrome P450 family. Requires heme as cofactor.

It carries out the reaction 2 flaviolin + 2 reduced [2Fe-2S]-[ferredoxin] + O2 + H(+) = 3,3'-biflaviolin + 2 oxidized [2Fe-2S]-[ferredoxin] + 2 H2O. The enzyme catalyses 2 flaviolin + 2 reduced [2Fe-2S]-[ferredoxin] + O2 + H(+) = 3,8'-biflaviolin + 2 oxidized [2Fe-2S]-[ferredoxin] + 2 H2O. Its pathway is pigment biosynthesis. Catalyzes oxidative C-C coupling reaction to polymerize flaviolin and form highly conjugated pigments which protect the soil bacterium from deleterious effects of UV irradiation (two isomers of biflaviolin and one triflaviolin). The protein is Biflaviolin synthase CYP158A1 of Streptomyces coelicolor (strain ATCC BAA-471 / A3(2) / M145).